Reading from the N-terminus, the 334-residue chain is 6-phosphogluconolactonase (334 aa).

This sequence belongs to the cycloisomerase 2 family.

The catalysed reaction is 6-phospho-D-glucono-1,5-lactone + H2O = 6-phospho-D-gluconate + H(+). It functions in the pathway carbohydrate degradation; pentose phosphate pathway; D-ribulose 5-phosphate from D-glucose 6-phosphate (oxidative stage): step 2/3. Its function is as follows. Catalyzes the hydrolysis of 6-phosphogluconolactone to 6-phosphogluconate. The protein is 6-phosphogluconolactonase of Yersinia pseudotuberculosis serotype IB (strain PB1/+).